A 266-amino-acid polypeptide reads, in one-letter code: Glucosamine-6-phosphate deaminase (266 aa).

D72 serves as the catalytic Proton acceptor; for enolization step. D141 (for ring-opening step) is an active-site residue. Residue H143 is the Proton acceptor; for ring-opening step of the active site. E148 serves as the catalytic For ring-opening step.

Belongs to the glucosamine/galactosamine-6-phosphate isomerase family. NagB subfamily. Homohexamer.

The catalysed reaction is alpha-D-glucosamine 6-phosphate + H2O = beta-D-fructose 6-phosphate + NH4(+). Its pathway is amino-sugar metabolism; N-acetylneuraminate degradation; D-fructose 6-phosphate from N-acetylneuraminate: step 5/5. With respect to regulation, allosterically activated by N-acetylglucosamine 6-phosphate (GlcNAc6P). In terms of biological role, catalyzes the reversible isomerization-deamination of glucosamine 6-phosphate (GlcN6P) to form fructose 6-phosphate (Fru6P) and ammonium ion. This is Glucosamine-6-phosphate deaminase from Cronobacter sakazakii (strain ATCC BAA-894) (Enterobacter sakazakii).